Consider the following 593-residue polypeptide: UvrABC system protein C (593 aa).

Residues 17-94 (MEPGCYLMKD…IKQYQPRYNI (78 aa)) form the GIY-YIG domain. One can recognise a UVR domain in the interval 199 to 234 (KTILKSLEERMLTASESLDFERAKEYRDLIQHIQNL).

The protein belongs to the UvrC family. As to quaternary structure, interacts with UvrB in an incision complex.

It is found in the cytoplasm. Its function is as follows. The UvrABC repair system catalyzes the recognition and processing of DNA lesions. UvrC both incises the 5' and 3' sides of the lesion. The N-terminal half is responsible for the 3' incision and the C-terminal half is responsible for the 5' incision. The protein is UvrABC system protein C of Staphylococcus aureus (strain MSSA476).